The chain runs to 211 residues: Testis-expressed protein 35 (211 aa).

Residues 47 to 111 are a coiled coil; the sequence is GGTKELKNEL…MDVLINIQKN (65 aa).

This Bos taurus (Bovine) protein is Testis-expressed protein 35 (Tex35).